A 149-amino-acid polypeptide reads, in one-letter code: Large ribosomal subunit protein bL9 (149 aa).

Belongs to the bacterial ribosomal protein bL9 family.

Its function is as follows. Binds to the 23S rRNA. The sequence is that of Large ribosomal subunit protein bL9 from Helicobacter pylori (strain G27).